The following is an 859-amino-acid chain: Tripartite terminase subunit 1 (859 aa).

The C3H1-type zinc finger occupies 231–259 (CCICLDELSVTANQGDTIYKRLGYSVCDH). The segment covering 512-525 (TRPRADKAGGRAED) has biased composition (basic and acidic residues). The tract at residues 512-542 (TRPRADKAGGRAEDGAGDCDDEGYPGAADAT) is disordered. ATP is bound at residue 782–789 (FESIFQCG).

Belongs to the herpesviridae TRM1 protein family. As to quaternary structure, associates with TRM2 and TRM3 to form the tripartite terminase complex. Interacts with portal protein.

It localises to the host nucleus. In terms of biological role, component of the molecular motor that translocates viral genomic DNA in empty capsid during DNA packaging. Forms a tripartite terminase complex together with TRM2 and TRM3 in the host cytoplasm. Once the complex reaches the host nucleus, it interacts with the capsid portal vertex. This portal forms a ring in which genomic DNA is translocated into the capsid. TRM1 carries an endonuclease activity that plays an important role for the cleavage of concatemeric viral DNA into unit length genomes. The polypeptide is Tripartite terminase subunit 1 (Amazona oratrix (yellow-headed parrot)).